A 67-amino-acid polypeptide reads, in one-letter code: MARITVEDCLNQVPNRFKLTLAATYRARELAQGHAPRIDSKDKPTVTALREIAGGHTGLEMLRKVPT.

The protein belongs to the RNA polymerase subunit omega family. As to quaternary structure, the RNAP catalytic core consists of 2 alpha, 1 beta, 1 beta' and 1 omega subunit. When a sigma factor is associated with the core the holoenzyme is formed, which can initiate transcription.

It carries out the reaction RNA(n) + a ribonucleoside 5'-triphosphate = RNA(n+1) + diphosphate. Functionally, promotes RNA polymerase assembly. Latches the N- and C-terminal regions of the beta' subunit thereby facilitating its interaction with the beta and alpha subunits. This Bordetella petrii (strain ATCC BAA-461 / DSM 12804 / CCUG 43448) protein is DNA-directed RNA polymerase subunit omega.